Consider the following 219-residue polypeptide: Histone H1.4 (219 aa).

Low complexity predominate over residues 1–15; that stretch reads MSETAPAAPAAPAPA. The segment at 1–41 is disordered; it reads MSETAPAAPAAPAPAEKTPVKKKARKSAGAAKRKASGPPVS. Ser2 carries the N-acetylserine modification. Ser2 is subject to Phosphoserine. Lys17 carries the N6-acetyllysine modification. The residue at position 18 (Thr18) is a Phosphothreonine. Residues 20–35 show a composition bias toward basic residues; the sequence is VKKKARKSAGAAKRKA. Lys26 carries the N6-acetyllysine; alternate modification. Lys26 carries the post-translational modification N6-methyllysine; alternate. At Lys34 the chain carries N6-(beta-hydroxybutyryl)lysine; alternate. Lys34 is subject to N6-succinyllysine; alternate. Ser36 bears the Phosphoserine mark. Residues 36–109 form the H15 domain; the sequence is SGPPVSELIT…GASGSFKLNK (74 aa). Lys52 carries the N6-(beta-hydroxybutyryl)lysine modification. Residue Arg54 is modified to Citrulline. N6-(beta-hydroxybutyryl)lysine occurs at positions 64, 85, 90, and 106. Residues 91–219 form a disordered region; it reads GTLVQTKGTG…KPKKAPAKKK (129 aa). Residues 119–140 show a composition bias toward basic residues; sequence KPKKAGAAKPKKPAGAAKKPKK. Thr146 is modified (phosphothreonine). Composition is skewed to basic residues over residues 149–160 and 168–185; these read KGAKKTPKKAKK and KKAKSPKKAKAAKPKKAP. Phosphoserine is present on Ser187. A compositionally biased stretch (basic residues) spans 192 to 219; the sequence is KAVKPKAAKPKAAKPKTAKPKKAPAKKK.

Belongs to the histone H1/H5 family. In terms of processing, H1 histones are progressively phosphorylated during the cell cycle, becoming maximally phosphorylated during late G2 phase and M phase, and being dephosphorylated sharply thereafter. Post-translationally, acetylated at Lys-26. Deacetylated at Lys-26 by SIRT1. Citrullination at Arg-54 (H1R54ci) by PADI4 takes place within the DNA-binding site of H1 and results in its displacement from chromatin and global chromatin decondensation, thereby promoting pluripotency and stem cell maintenance.

Its subcellular location is the nucleus. The protein resides in the chromosome. Histone H1 protein binds to linker DNA between nucleosomes forming the macromolecular structure known as the chromatin fiber. Histones H1 are necessary for the condensation of nucleosome chains into higher-order structured fibers. Also acts as a regulator of individual gene transcription through chromatin remodeling, nucleosome spacing and DNA methylation. The polypeptide is Histone H1.4 (Oryctolagus cuniculus (Rabbit)).